The following is a 723-amino-acid chain: BTB/POZ domain-containing protein 18 (723 aa).

The BTB domain occupies 34–102; the sequence is CDALLQAEGE…LYTSEMEVSQ (69 aa). 3 disordered regions span residues 150-176, 188-350, and 370-394; these read APIS…PSPL, EGAH…EEGQ, and EPPL…PSGT. Polar residues-rich tracts occupy residues 162–174 and 195–205; these read RPQT…QTPS and NLPNADSLSDT. Low complexity-rich tracts occupy residues 217 to 227 and 271 to 286; these read QESRSSPSSQR and TSTP…SMPT. 2 stretches are compositionally biased toward basic and acidic residues: residues 303-312 and 327-336; these read QGVDKQKPGE and KPAENKKQSP. Ser414 carries the phosphoserine modification. Positions 603–637 are disordered; the sequence is TPDLEITSSQPLDGQGEKLLHFDSSDPSQRSYNHL. The segment covering 617–626 has biased composition (basic and acidic residues); that stretch reads QGEKLLHFDS. Over residues 627–636 the composition is skewed to polar residues; it reads SDPSQRSYNH. Residues Ser682 and Ser683 each carry the phosphoserine modification. The tract at residues 699-723 is disordered; that stretch reads LGPTSVPSVWPDPSSESETEVDILT. Residues 713-723 are compositionally biased toward acidic residues; sequence SESETEVDILT.

As to expression, expressed in testis.

The protein resides in the nucleus. Its function is as follows. Specifically required during spermatogenesis to promote expression of piRNA precursors. The piRNA metabolic process mediates the repression of transposable elements during meiosis by forming complexes composed of piRNAs and Piwi proteins and governs the methylation and subsequent repression of transposons, which is essential for the germline integrity. Acts by facilitating transcription elongation at piRNA loci during pachytene. The polypeptide is BTB/POZ domain-containing protein 18 (Mus musculus (Mouse)).